A 337-amino-acid polypeptide reads, in one-letter code: UDP-3-O-acylglucosamine N-acyltransferase 2 (337 aa).

Residue His-238 is the Proton acceptor of the active site.

The protein belongs to the transferase hexapeptide repeat family. LpxD subfamily. In terms of assembly, homotrimer.

It catalyses the reaction a UDP-3-O-[(3R)-3-hydroxyacyl]-alpha-D-glucosamine + a (3R)-hydroxyacyl-[ACP] = a UDP-2-N,3-O-bis[(3R)-3-hydroxyacyl]-alpha-D-glucosamine + holo-[ACP] + H(+). The protein operates within bacterial outer membrane biogenesis; LPS lipid A biosynthesis. In terms of biological role, catalyzes the N-acylation of UDP-3-O-acylglucosamine using 3-hydroxyacyl-ACP as the acyl donor. Is involved in the biosynthesis of lipid A, a phosphorylated glycolipid that anchors the lipopolysaccharide to the outer membrane of the cell. The protein is UDP-3-O-acylglucosamine N-acyltransferase 2 of Francisella tularensis subsp. tularensis (strain FSC 198).